The sequence spans 841 residues: uncharacterized protein (841 aa).

Positions M1 to A31 are cleaved as a signal peptide.

It is found in the secreted. This is an uncharacterized protein from Schizosaccharomyces pombe (strain 972 / ATCC 24843) (Fission yeast).